The primary structure comprises 411 residues: Arginine deiminase (411 aa).

Cys401 acts as the Amidino-cysteine intermediate in catalysis.

This sequence belongs to the arginine deiminase family.

It is found in the cytoplasm. The catalysed reaction is L-arginine + H2O = L-citrulline + NH4(+). It functions in the pathway amino-acid degradation; L-arginine degradation via ADI pathway; carbamoyl phosphate from L-arginine: step 1/2. This Staphylococcus aureus (strain JH9) protein is Arginine deiminase.